A 376-amino-acid polypeptide reads, in one-letter code: Protein FAM199X (376 aa).

The span at 237-253 (YIKEHSPRQRSTRESWK) shows a compositional bias: basic and acidic residues. The segment at 237–350 (YIKEHSPRQR…QRQARKERLS (114 aa)) is disordered. A compositionally biased stretch (low complexity) spans 255-300 (TSYSTASTSGVSGASVSSSSASMVSTASSTGSSGGNSASNSSANMS). A compositionally biased stretch (basic residues) spans 318-337 (DSKKRSKQRKLQQKALRKRQ). Positions 320-349 (KKRSKQRKLQQKALRKRQLKEQRQARKERL) form a coiled coil. Residues 338 to 349 (LKEQRQARKERL) are compositionally biased toward basic and acidic residues.

This sequence belongs to the FAM199 family.

This is Protein FAM199X (fam199x) from Xenopus tropicalis (Western clawed frog).